The sequence spans 171 residues: Putative phosphoesterase BPUM_1117 (171 aa).

His34 serves as the catalytic Proton donor. Short sequence motifs (HXTX) lie at residues 34–37 (HLTL) and 115–118 (HVTV). Residue His115 is the Proton acceptor of the active site.

Belongs to the 2H phosphoesterase superfamily. YjcG family.

This chain is Putative phosphoesterase BPUM_1117, found in Bacillus pumilus (strain SAFR-032).